A 582-amino-acid chain; its full sequence is ATP-dependent lipid A-core flippase (582 aa).

5 consecutive transmembrane segments (helical) span residues 25–45 (WFML…QAGA), 64–84 (VLIV…GQFM), 142–162 (AIIV…FLLW), 165–185 (WKLT…MNIT), and 253–273 (VIVQ…YIHL). The 281-residue stretch at 29–309 (VISVIGYALY…LTDVNVKVQR (281 aa)) folds into the ABC transmembrane type-1 domain. The ABC transporter domain occupies 342–577 (IDFEGVSFGY…NGLYTQMYRM (236 aa)). Residue 375–382 (GRSGAGKS) participates in ATP binding.

Belongs to the ABC transporter superfamily. Lipid exporter (TC 3.A.1.106) family. As to quaternary structure, homodimer.

It is found in the cell inner membrane. The catalysed reaction is ATP + H2O + lipid A-core oligosaccharideSide 1 = ADP + phosphate + lipid A-core oligosaccharideSide 2.. Its function is as follows. Involved in lipopolysaccharide (LPS) biosynthesis. Translocates lipid A-core from the inner to the outer leaflet of the inner membrane. Transmembrane domains (TMD) form a pore in the inner membrane and the ATP-binding domain (NBD) is responsible for energy generation. The polypeptide is ATP-dependent lipid A-core flippase (Alcanivorax borkumensis (strain ATCC 700651 / DSM 11573 / NCIMB 13689 / SK2)).